The sequence spans 176 residues: Protein GrpE (176 aa).

The tract at residues 1-31 is disordered; that stretch reads MSEQKQEFENENAENSEHLQDENLQNIEDVE.

This sequence belongs to the GrpE family. Homodimer.

The protein localises to the cytoplasm. In terms of biological role, participates actively in the response to hyperosmotic and heat shock by preventing the aggregation of stress-denatured proteins, in association with DnaK and GrpE. It is the nucleotide exchange factor for DnaK and may function as a thermosensor. Unfolded proteins bind initially to DnaJ; upon interaction with the DnaJ-bound protein, DnaK hydrolyzes its bound ATP, resulting in the formation of a stable complex. GrpE releases ADP from DnaK; ATP binding to DnaK triggers the release of the substrate protein, thus completing the reaction cycle. Several rounds of ATP-dependent interactions between DnaJ, DnaK and GrpE are required for fully efficient folding. The chain is Protein GrpE from Campylobacter jejuni subsp. doylei (strain ATCC BAA-1458 / RM4099 / 269.97).